A 266-amino-acid polypeptide reads, in one-letter code: MQNVNEAPTYIHQFDKDEQIISTQDLSVFYGGSVQKLFNASLQFKKKTITALIGGSGSGKSTFLRCLNRMNDKVARVDGEIWYHGLDINKNNINVYQLRKNIGMVFQKPNPFPKSIRENITYALKANGENDKQKLDQIVEESLRAAALWDEVKDKLDKSALAMSGGQQQRLCIARALALKPEILLLDEPASALDPVSTSKLEDTLKQLRTDYTMIMVTHNMQQASRISDYTAFFHLGHVLEYDTTENIFTNPKGEITEDYIRGSFG.

The ABC transporter domain maps to 21 to 261; it reads ISTQDLSVFY…PKGEITEDYI (241 aa). An ATP-binding site is contributed by 54 to 61; that stretch reads GGSGSGKS.

Belongs to the ABC transporter superfamily. Phosphate importer (TC 3.A.1.7) family. As to quaternary structure, the complex is composed of two ATP-binding proteins (PstB), two transmembrane proteins (PstC and PstA) and a solute-binding protein (PstS).

The protein localises to the cell membrane. The catalysed reaction is phosphate(out) + ATP + H2O = ADP + 2 phosphate(in) + H(+). Part of the ABC transporter complex PstSACB involved in phosphate import. Responsible for energy coupling to the transport system. The chain is Phosphate import ATP-binding protein PstB 1 from Lactobacillus johnsonii (strain CNCM I-12250 / La1 / NCC 533).